The chain runs to 320 residues: Methenyltetrahydromethanopterin cyclohydrolase (320 aa).

The protein belongs to the MCH family.

It localises to the cytoplasm. The catalysed reaction is 5,10-methenyl-5,6,7,8-tetrahydromethanopterin + H2O = N(5)-formyl-5,6,7,8-tetrahydromethanopterin + H(+). The protein operates within one-carbon metabolism; methanogenesis from CO(2); 5,10-methenyl-5,6,7,8-tetrahydromethanopterin from CO(2): step 3/3. Its function is as follows. Catalyzes the reversible interconversion of 5-formyl-H(4)MPT to methenyl-H(4)MPT(+). The polypeptide is Methenyltetrahydromethanopterin cyclohydrolase (mch) (Methanothermobacter thermautotrophicus (strain ATCC 29096 / DSM 1053 / JCM 10044 / NBRC 100330 / Delta H) (Methanobacterium thermoautotrophicum)).